Reading from the N-terminus, the 159-residue chain is Cytochrome c nitrite reductase subunit NrfH (159 aa).

The Cytoplasmic segment spans residues 2-14 (SEEKSRNGPARLK). The helical; Signal-anchor for type II membrane protein transmembrane segment at 15 to 33 (LVLGGATLGVVALATVAFG) threads the bilayer. Over 34-159 (MKYTDQRPFC…PISTREVADE (126 aa)) the chain is Periplasmic. Residues Cys43, Cys46, Met49, His61, and Cys66 each coordinate heme. Asn67 serves as a coordination point for a menaquinol. Residues Cys69 and His70 each coordinate heme. Residues Lys82 and Asp89 each coordinate a menaquinol. Asp89 contacts heme. The interaction with NrfA stretch occupies residues 99–100 (GD). Heme-binding residues include Cys116, Cys119, His120, Cys136, Cys139, His140, and His145. The segment at 123 to 158 (TNVEVASMEAKKYCTDCHRNVQHMRMKPISTREVAD) is interaction with NrfA.

Belongs to the NapC/NirT/NrfH family. As to quaternary structure, component of the NrfHA cytochrome c nitrite reductase complex composed of 4 NrfA catalytic subunits and 2 NrfH quinone-binding subunits. Interacts with NrfA homodimer. The cofactor is heme.

Its subcellular location is the cell inner membrane. Its function is as follows. Electron donor subunit of the cytochrome c nitrite reductase holocomplex NrfHA. Acquires electrons from the menaquinone pool and mediates their transfer to the catalytic subunit NrfA in an anaerobic respiratory process of nitrite. The other biological function of the NrfHA holocomplex is to detoxify nitrite. This function is essential for the survival of this organism as it enables it to overcome inhibition by nitrite, which is produced by other organisms living in the same environment. The sequence is that of Cytochrome c nitrite reductase subunit NrfH from Nitratidesulfovibrio vulgaris (strain ATCC 29579 / DSM 644 / CCUG 34227 / NCIMB 8303 / VKM B-1760 / Hildenborough) (Desulfovibrio vulgaris).